A 192-amino-acid chain; its full sequence is uncharacterized protein (192 aa).

Residues 29 to 160 (HRQAAVLIPI…PLDIYRRGDS (132 aa)) enclose the Nudix hydrolase domain. Positions 67-89 (GAVDDTDASVIAAALREAEEEVA) match the Nudix box motif. Mg(2+)-binding residues include E83 and E87.

Belongs to the Nudix hydrolase family. PCD1 subfamily. Requires Mn(2+) as cofactor. Mg(2+) is required as a cofactor.

Functionally, probably mediates the hydrolysis of some nucleoside diphosphate derivatives. This is an uncharacterized protein from Escherichia coli O139:H28 (strain E24377A / ETEC).